Here is a 205-residue protein sequence, read N- to C-terminus: MKIINILFCLLLIVLNSCNANDNDTFNNNSVQQTKSRKKRDLSQKELLQQEKITLTSDEEKMFTSLVTAFKYTVEKLSGDTNGCNNENKNKCTGFFDWLSEDIQKQKELAGAFTKVYNFLKSKAQNEAFDTYIKGAIDCKKTLHKIVIIITNMEKVRTKRAYFRGVAGSIFTDNNDNDGIYKCLKDELLNDTSNHYEGLTSDWDN.

Residues 1-17 (MKIINILFCLLLIVLNS) form the signal peptide. Cysteine 18 carries the N-palmitoyl cysteine lipid modification. A lipid anchor (S-diacylglycerol cysteine) is attached at cysteine 18.

It belongs to the Multicopy lipoprotein (Mlp) family.

The protein localises to the cell outer membrane. In terms of biological role, an outer membrane protein that may participate in pathogenesis. Some human Lyme disease patients have antibodies against this protein. The Mlp proteins probably undergo intragenic recombination, generating new alleles. In Borreliella burgdorferi (strain ATCC 35210 / DSM 4680 / CIP 102532 / B31) (Borrelia burgdorferi), this protein is Lipoprotein MlpB.